Consider the following 390-residue polypeptide: MKVLFFDCFAGIAGDMTVAAMVELGLPLEHLRRELARLGLPASTYELAVEPVRRKGVAASHFEVRVEQDQPHRHYADIAAMIDGSSLAATVKDKAQRIFRRIAEAEAKVHGMEIGHVHFHEVGAVDSIIDIVGAAIGLDYLGIEAVYVSPLPLGSGYIETAHGRLPVPAPATAELLKGLPVHGNIGSGERVTPTGAAIVAALGTAFGSHPPMEIRSIGYGAGSKDFADMPNLLRLVLGETAETLQRDEIVVLETNIDDMNPELLGFLMERLFEKGALDVTFSPLQMKKNRPGTLVTVITPCAKRDELARLILSESTAIGVRYYPAQRLILSRTVEERLTSLGPVKVKVVTDDALLRRVVPEFEECRRLTAEKGLPLMDVYRIVEREVAGT.

The protein belongs to the LarC family.

The protein is Putative nickel insertion protein of Geotalea daltonii (strain DSM 22248 / JCM 15807 / FRC-32) (Geobacter daltonii).